Reading from the N-terminus, the 415-residue chain is Beta-1,4-glucuronyltransferase 1 (415 aa).

At 1–8 the chain is on the cytoplasmic side; the sequence is MQMSYAIR. The helical; Signal-anchor for type II membrane protein transmembrane segment at 9–36 threads the bilayer; the sequence is CAFYQLLLAALMLVAMLQLLYLSLLSGL. Residues 37–415 lie on the Lumenal side of the membrane; it reads HGQEEQDQYF…AKYPNSPRRC (379 aa). N-linked (GlcNAc...) asparagine glycosylation occurs at Asn204. Mn(2+) is bound by residues Asp227 and Asp229. Asn300 carries an N-linked (GlcNAc...) asparagine glycan.

It belongs to the glycosyltransferase 49 family. Interacts with LARGE1 and LARGE2. It depends on Mn(2+) as a cofactor.

It is found in the golgi apparatus membrane. The catalysed reaction is 3-O-[beta-D-Xyl-(1-&gt;4)-Rib-ol-P-Rib-ol-P-3-beta-D-GalNAc-(1-&gt;3)-beta-D-GlcNAc-(1-&gt;4)-(O-6-P-alpha-D-Man)]-Thr-[protein] + UDP-alpha-D-glucuronate = 3-O-[beta-D-GlcA-(1-&gt;3)-beta-D-Xyl-(1-&gt;4)-Rib-ol-P-Rib-ol-P-3-beta-D-GalNAc-(1-&gt;3)-beta-D-GlcNAc-(1-&gt;4)-(O-6-P-alpha-D-Man)]-Thr-[protein] + UDP + H(+). Its pathway is protein modification; protein glycosylation. Functionally, beta-1,4-glucuronyltransferase involved in O-mannosylation of alpha-dystroglycan (DAG1). Transfers a glucuronic acid (GlcA) residue onto a xylose (Xyl) acceptor to produce the glucuronyl-beta-1,4-xylose-beta disaccharide primer, which is further elongated by LARGE1, during synthesis of phosphorylated O-mannosyl glycan. Phosphorylated O-mannosyl glycan is a carbohydrate structure present in alpha-dystroglycan (DAG1), which is required for binding laminin G-like domain-containing extracellular proteins with high affinity. Required for axon guidance; via its function in O-mannosylation of alpha-dystroglycan (DAG1). The protein is Beta-1,4-glucuronyltransferase 1 of Pongo abelii (Sumatran orangutan).